We begin with the raw amino-acid sequence, 375 residues long: UDP-N-acetylglucosamine--N-acetylmuramyl-(pentapeptide) pyrophosphoryl-undecaprenol N-acetylglucosamine transferase (375 aa).

Residues 13–15 (TGG), N124, R165, S193, and Q294 each bind UDP-N-acetyl-alpha-D-glucosamine.

This sequence belongs to the glycosyltransferase 28 family. MurG subfamily.

It is found in the cell inner membrane. The catalysed reaction is di-trans,octa-cis-undecaprenyl diphospho-N-acetyl-alpha-D-muramoyl-L-alanyl-D-glutamyl-meso-2,6-diaminopimeloyl-D-alanyl-D-alanine + UDP-N-acetyl-alpha-D-glucosamine = di-trans,octa-cis-undecaprenyl diphospho-[N-acetyl-alpha-D-glucosaminyl-(1-&gt;4)]-N-acetyl-alpha-D-muramoyl-L-alanyl-D-glutamyl-meso-2,6-diaminopimeloyl-D-alanyl-D-alanine + UDP + H(+). It participates in cell wall biogenesis; peptidoglycan biosynthesis. Its function is as follows. Cell wall formation. Catalyzes the transfer of a GlcNAc subunit on undecaprenyl-pyrophosphoryl-MurNAc-pentapeptide (lipid intermediate I) to form undecaprenyl-pyrophosphoryl-MurNAc-(pentapeptide)GlcNAc (lipid intermediate II). The chain is UDP-N-acetylglucosamine--N-acetylmuramyl-(pentapeptide) pyrophosphoryl-undecaprenol N-acetylglucosamine transferase from Mesorhizobium japonicum (strain LMG 29417 / CECT 9101 / MAFF 303099) (Mesorhizobium loti (strain MAFF 303099)).